The sequence spans 463 residues: Bifunctional protein HldE (463 aa).

A ribokinase region spans residues 1–315 (MKKILVIGDL…LILNQTHPKI (315 aa)). 191 to 194 (NRAE) serves as a coordination point for ATP. Asp260 is an active-site residue. The segment at 334–463 (FTNGCFDILH…IEKIKRTHND (130 aa)) is cytidylyltransferase.

It in the N-terminal section; belongs to the carbohydrate kinase PfkB family. The protein in the C-terminal section; belongs to the cytidylyltransferase family. Homodimer.

It carries out the reaction D-glycero-beta-D-manno-heptose 7-phosphate + ATP = D-glycero-beta-D-manno-heptose 1,7-bisphosphate + ADP + H(+). The catalysed reaction is D-glycero-beta-D-manno-heptose 1-phosphate + ATP + H(+) = ADP-D-glycero-beta-D-manno-heptose + diphosphate. It participates in nucleotide-sugar biosynthesis; ADP-L-glycero-beta-D-manno-heptose biosynthesis; ADP-L-glycero-beta-D-manno-heptose from D-glycero-beta-D-manno-heptose 7-phosphate: step 1/4. It functions in the pathway nucleotide-sugar biosynthesis; ADP-L-glycero-beta-D-manno-heptose biosynthesis; ADP-L-glycero-beta-D-manno-heptose from D-glycero-beta-D-manno-heptose 7-phosphate: step 3/4. The protein operates within bacterial outer membrane biogenesis; LPS core biosynthesis. In terms of biological role, catalyzes the phosphorylation of D-glycero-D-manno-heptose 7-phosphate at the C-1 position to selectively form D-glycero-beta-D-manno-heptose-1,7-bisphosphate. Catalyzes the ADP transfer from ATP to D-glycero-beta-D-manno-heptose 1-phosphate, yielding ADP-D-glycero-beta-D-manno-heptose. In Helicobacter pylori (strain J99 / ATCC 700824) (Campylobacter pylori J99), this protein is Bifunctional protein HldE.